Consider the following 353-residue polypeptide: MTIALGKLTKEEKDLFDTMDDWLRRDRFIFVGWSGLLLFPCAYFALGGWFTGTTFVTSWYTHGLASSYLEGCNFLTAAVSTPANSLAHSLLFLWGPEAQGDFTRWCQLGGLWTFVALHGAFGLIGFMLRQFELARSVQLRPYNAIAFSAPIAVFVSVFFIYPLGQSGWFFAPSFGVAAIFRFIRFFQGFHNWTLNPFHMMGVAGVLGAALLCAIHGATVENTLFEDGDGANTFRAFNPTQSEETYSMVTANRFWSQIFGVAFSNKRWLHFFMLFVPVTGLWMSALGVVGLALNLRAYDFVSQEIRAAEDPEFETFYTKNILLNEGIRAWMAAQDQPHENLIFPEEVLPRGNAL.

N-acetylthreonine is present on Thr-2. Thr-2 carries the phosphothreonine modification. The helical transmembrane segment at 41-61 (CAYFALGGWFTGTTFVTSWYT) threads the bilayer. A chlorophyll a-binding site is contributed by His-118. Residues 125–141 (GFMLRQFELARSVQLRP) form a helical membrane-spanning segment. Pheophytin a contacts are provided by Gln-130 and Asn-143. Residues 153–166 (VFVSVFFIYPLGQS) traverse the membrane as a helical segment. His-198 lines the chlorophyll a pocket. The chain crosses the membrane as a helical span at residues 208–228 (AALLCAIHGATVENTLFEDGD). 2 residues coordinate a plastoquinone: His-215 and Phe-262. Position 215 (His-215) interacts with Fe cation. His-269 contacts Fe cation. Residues 279–295 (GLWMSALGVVGLALNLR) form a helical membrane-spanning segment.

The protein belongs to the reaction center PufL/M/PsbA/D family. In terms of assembly, PSII is composed of 1 copy each of membrane proteins PsbA, PsbB, PsbC, PsbD, PsbE, PsbF, PsbH, PsbI, PsbJ, PsbK, PsbL, PsbM, PsbT, PsbX, PsbY, PsbZ, Psb30/Ycf12, at least 3 peripheral proteins of the oxygen-evolving complex and a large number of cofactors. It forms dimeric complexes. The cofactor is The D1/D2 heterodimer binds P680, chlorophylls that are the primary electron donor of PSII, and subsequent electron acceptors. It shares a non-heme iron and each subunit binds pheophytin, quinone, additional chlorophylls, carotenoids and lipids. There is also a Cl(-1) ion associated with D1 and D2, which is required for oxygen evolution. The PSII complex binds additional chlorophylls, carotenoids and specific lipids..

The protein resides in the plastid membrane. It carries out the reaction 2 a plastoquinone + 4 hnu + 2 H2O = 2 a plastoquinol + O2. In terms of biological role, photosystem II (PSII) is a light-driven water:plastoquinone oxidoreductase that uses light energy to abstract electrons from H(2)O, generating O(2) and a proton gradient subsequently used for ATP formation. It consists of a core antenna complex that captures photons, and an electron transfer chain that converts photonic excitation into a charge separation. The D1/D2 (PsbA/PsbD) reaction center heterodimer binds P680, the primary electron donor of PSII as well as several subsequent electron acceptors. D2 is needed for assembly of a stable PSII complex. The polypeptide is Photosystem II D2 protein (Cuscuta exaltata (Tall dodder)).